We begin with the raw amino-acid sequence, 1335 residues long: MAKKFNYKLPSMVALTLFGTAFTAHQANAAEQPQNQSNHKNVLDDQTALKQAEKAKSEVTQSTTNVSGTQTYQDPTQVQPKQDTQSTTYDASLDEMSTYNEISSNQKQQSLSTDDANQNQTNSVTKNQQEETNDLTQEDKTSTDTNQLQETQSVAKENEKDLGANANNEQQDKKMTASQPSENQAIETQTASNDNESQQKSQQVTSEQNETATPKVSNTNASGYNFDYDDEDDDSSTDHLEPISLNNVNATSKQTTSYKYKEPAQRVTTNTVKKETASNQATIDTKQFTPFSATAQPRTVYSVSSQKTSSLPKYTPKVNSSINNYIRKKNMKAPRIEEDYTSYFPKYGYRNGVGRPEGIVVHDTANDNSTIDGEIAFMKRNYTNAFVHAFVDGNRIIETAPTDYLSWGAGPYGNQRFINVEIVHTHDYDSFARSMNNYADYAATQLQYYNLKPDSAENDGRGTVWTHAAISNFLGGTDHADPHQYLRSHNYSYAELYDLIYEKYLIKTKQVAPWGTTSTKPSQPSKPSGGTNNKLTVSANRGVAQIKPTNNGLYTTVYDSKGHKTDQVQKTLSVTKTATLGNNKFYLVEDYNSGKKYGWVKQGDVVYNTAKAPVKVNQTYNVKAGSTLYTVPWGTPKQVASKVSGTGNQTFKATKQQQIDKATYLYGTVNGKSGWISKYYLTTASKPSNPTKPSTNNQLTVTNNSGVAQINAKNSGLYTTVYDTKGKTTNQIQRTLSVTKAATLGDKKFYLVGDYNTGTNYGWVKQDEVIYNTAKSPVKINQTYNVKPGVKLHTVPWGTYNQVAGTVSGKGDQTFKATKQQQIDKATYLYGTVNGKSGWISKYYLTAPSKVQALSTQSTPAPKQVKPSTQTVNQIAQVKANNSGIRASVYDKTAKSGTKYANRTFLINKQRTQGNNTYVLLQDGTSNTPLGWVNINDVTTQNIGKQTQSIGKYSVKPTNNGLYSIAWGTKNQQLLAPNTLANQAFNASKAVYVGKDLYLYGTVNNRTGWIAAKDLIQNSTDAQSTPYNYTFVINNSKSYFYMDPTKANRYSLKPYYEQTFTVIKQKNINGVKWYYGQLLDGKYVWIKSTDLVKEKIKYAYTGMTLNNAINIQSRLKYKPQVQNEPLKWSNANYSQIKNAMDTKRLANDSSLKYQFLRLDQPQYLSAQALNKLLKGKGVLENQGAAFSQAARKYGLNEIYLISHALVETGNGTSQLAKGGDVSKGKFTTKTGHKYHNVFGIGAFDNNALVDGIKYAKNAGWTSVSKAIIGGAKFIGNSYVKAGQNTLYKMRWNPANPGTHQYATDINWANVNAQVLKQFYDKIGEVGKYFEIPIYK.

Residues 1–29 (MAKKFNYKLPSMVALTLFGTAFTAHQANA) form the signal peptide. 3 disordered regions span residues 51–88 (QAEK…QSTT), 100–262 (NEIS…KYKE), and 514–535 (WGTT…NNKL). Composition is skewed to polar residues over residues 58–88 (EVTQ…QSTT), 100–127 (NEIS…VTKN), 143–155 (TDTN…QSVA), 176–223 (TASQ…NASG), and 244–258 (SLNN…TTSY). Residues 303 to 863 (VSSQKTSSLP…LSTQSTPAPK (561 aa)) form an N-acetylmuramoyl-L-alanine amidase region. A compositionally biased stretch (low complexity) spans 515-531 (GTTSTKPSQPSKPSGGT). GW domains lie at 533 to 610 (NKLT…YNTA), 612 to 686 (APVK…TASK), 700 to 774 (TVTN…YNTA), 776 to 850 (SPVK…APSK), 868 to 943 (STQT…TQNI), 945 to 1020 (KQTQ…QNST), and 1023 to 1096 (QSTP…KEKI). Positions 864–1335 (QVKPSTQTVN…GKYFEIPIYK (472 aa)) are endo-beta-N-acetylglucosaminidase.

The protein in the N-terminal section; belongs to the N-acetylmuramoyl-L-alanine amidase 2 family. In the C-terminal section; belongs to the glycosyl hydrolase 73 family. As to quaternary structure, oligomer; forms a ring structure at the cell surface which is important for efficient partitioning of daughter cells after cell division. Post-translationally, undergoes proteolytic processing to generate the two extracellular lytic enzymes, probably at the septal region on the cell surface.

Its subcellular location is the secreted. It catalyses the reaction Hydrolyzes the link between N-acetylmuramoyl residues and L-amino acid residues in certain cell-wall glycopeptides.. The catalysed reaction is an N(4)-(oligosaccharide-(1-&gt;3)-[oligosaccharide-(1-&gt;6)]-beta-D-Man-(1-&gt;4)-beta-D-GlcNAc-(1-&gt;4)-alpha-D-GlcNAc)-L-asparaginyl-[protein] + H2O = an oligosaccharide-(1-&gt;3)-[oligosaccharide-(1-&gt;6)]-beta-D-Man-(1-&gt;4)-D-GlcNAc + N(4)-(N-acetyl-beta-D-glucosaminyl)-L-asparaginyl-[protein]. Its function is as follows. Endohydrolysis of the di-N-acetylchitobiosyl unit in high-mannose glycopeptides and glycoproteins containing the -[(Man)5(GlcNAc)2]-Asn structure. One N-acetyl-D-glucosamine residue remains attached to the protein; the rest of the oligosaccharide is released intact. Cleaves the peptidoglycan connecting the daughter cells at the end of the cell division cycle, resulting in the separation of the two newly divided cells. Acts as an autolysin in penicillin-induced lysis. The polypeptide is Bifunctional autolysin (atl) (Staphylococcus epidermidis (strain ATCC 12228 / FDA PCI 1200)).